Consider the following 181-residue polypeptide: MSEAPKKRWYVVQAFSGFEGRVATSLREHIKLHNMEDLFGEVMVPTEEVVEIRGGQRRKSERKFFPGYVLVQMVMNDASWHLVRSVPRVMGFIGGTSDRPAPISDKEVDAIMNRLQQVGDKPRPKTLFEPGEMVRVNDGPFADFNGVVEEVDYEKSRLKVSVSIFGRATPVELDFSQVEKA.

A KOW domain is found at 130 to 161; sequence PGEMVRVNDGPFADFNGVVEEVDYEKSRLKVS.

The protein belongs to the NusG family. Monomer. Interacts with the transcription termination factor Rho and with RNA polymerase.

In terms of biological role, participates in transcription elongation, termination and antitermination. In the absence of Rho, increases the rate of transcription elongation by the RNA polymerase (RNAP), probably by partially suppressing pausing. In the presence of Rho, modulates most Rho-dependent termination events by interacting with the RNAP to render the complex more susceptible to the termination activity of Rho. May be required to overcome a kinetic limitation of Rho to function at certain terminators. Also involved in ribosomal RNA transcriptional antitermination. This chain is Transcription termination/antitermination protein NusG, found in Shigella flexneri.